Consider the following 365-residue polypeptide: Endophilin-B1 (365 aa).

Residue Met-1 is modified to N-acetylmethionine. The membrane-binding amphipathic helix stretch occupies residues 1–30 (MNIMDFNVKKLAADAGTFLSRAVQFTEEKL). Residues 1-37 (MNIMDFNVKKLAADAGTFLSRAVQFTEEKLGQAEKTE) are required for membrane binding. Residues 27 to 261 (EEKLGQAEKT…LGSFPSNYLS (235 aa)) enclose the BAR domain. At Thr-145 the chain carries Phosphothreonine; by CDK5. A coiled-coil region spans residues 155–186 (YKTIAKERKLLQNKRLDLDAAKTRLKKAKAAE). Residues 305–365 (SNNRKARVLY…VPITYLELLN (61 aa)) form the SH3 domain.

This sequence belongs to the endophilin family. In terms of assembly, homodimer, and heterodimer with SH3GLB2. Binds BAX; induction of apoptosis augments BAX binding. Binds DNM1, HTT, AMPH, BIN1 and ARFGAP1. Interacts with UVRAG; UVRAG bridges the interaction to BECN1 indicative for an association with the PI3K complex II (PI3KC3-C2). Isoform 3 interacts with PPP1CC; this interaction leads to the inhibition of phosphatase activity. Post-translationally, phosphorylated at Thr-145 by CDK5; this phosphorylation is required for autophagy induction in starved neurons and facilitates homodimerization. As to expression, isoform 1 is widely expressed. Isoform 2 is brain-specific. Isoform 3 is predominantly expressed in testis, but it is also detected in liver and, at much lower levels, in skin, stomach and ovary.

It localises to the cytoplasm. The protein resides in the golgi apparatus membrane. Its subcellular location is the mitochondrion outer membrane. It is found in the cytoplasmic vesicle. The protein localises to the autophagosome membrane. It localises to the midbody. May be required for normal outer mitochondrial membrane dynamics. Required for coatomer-mediated retrograde transport in certain cells. May recruit other proteins to membranes with high curvature. May promote membrane fusion. Involved in activation of caspase-dependent apoptosis by promoting BAX/BAK1 activation. Isoform 1 acts proapoptotic in fibroblasts. Involved in caspase-independent apoptosis during nutrition starvation and involved in the regulation of autophagy. Activates lipid kinase activity of PIK3C3 during autophagy probably by associating with the PI3K complex II (PI3KC3-C2). Associated with PI3KC3-C2 during autophagy may regulate the trafficking of ATG9A from the Golgi complex to the peripheral cytoplasm for the formation of autophagosomes by inducing Golgi membrane tubulation and fragmentation. Involved in regulation of degradative endocytic trafficking and cytokinesis, probably in the context of PI3KC3-C2. Isoform 2 acts antiapoptotic in neuronal cells; involved in maintenance of mitochondrial morphology and promotes neuronal viability. This Mus musculus (Mouse) protein is Endophilin-B1 (Sh3glb1).